The sequence spans 304 residues: Quinolinate synthase (304 aa).

Iminosuccinate contacts are provided by His24 and Ser41. Cys86 contributes to the [4Fe-4S] cluster binding site. Residues 112-114 (YVN) and Ser129 contribute to the iminosuccinate site. Cys171 is a [4Fe-4S] cluster binding site. Iminosuccinate-binding positions include 197 to 199 (HPE) and Thr214. Cys259 lines the [4Fe-4S] cluster pocket.

It belongs to the quinolinate synthase family. Type 2 subfamily. The cofactor is [4Fe-4S] cluster.

The protein localises to the cytoplasm. It catalyses the reaction iminosuccinate + dihydroxyacetone phosphate = quinolinate + phosphate + 2 H2O + H(+). Its pathway is cofactor biosynthesis; NAD(+) biosynthesis; quinolinate from iminoaspartate: step 1/1. Its function is as follows. Catalyzes the condensation of iminoaspartate with dihydroxyacetone phosphate to form quinolinate. The chain is Quinolinate synthase from Methanosarcina barkeri (strain Fusaro / DSM 804).